The following is an 816-amino-acid chain: Probable E3 ubiquitin-protein ligase hulA (816 aa).

The 112-residue stretch at 1-112 folds into the C2 domain; sequence MGSNLPAQPN…QMGGDEMLTR (112 aa). Disordered regions lie at residues 134 to 238 and 254 to 354; these read NLST…GWER and RTTT…YFVD. Residues 160–178 are compositionally biased toward low complexity; the sequence is VPQVAPSSSHPAASGAAPV. The span at 181–192 shows a compositional bias: polar residues; sequence SASNPSLNPQRV. Low complexity predominate over residues 193-213; that stretch reads PSTTRPSSTAAPASAAGAAAS. Polar residues-rich tracts occupy residues 214 to 227 and 254 to 267; these read NTHGSRTNLSSFED and RTTTWTRPSSNYNE. Positions 230 to 263 constitute a WW 1 domain; that stretch reads GRLPAGWERREDNLGRTYYVDHNTRTTTWTRPSS. The span at 268-295 shows a compositional bias: basic and acidic residues; sequence HAQRSQREANMQLERRAHQSRMLPEDRT. The segment covering 296–310 has biased composition (polar residues); the sequence is GANSPNLPESSQQAH. Positions 325–334 are enriched in low complexity; it reads ATGATTAGTG. 2 consecutive WW domains span residues 334 to 367 and 394 to 427; these read GELPPGWEQRTTPEGRPYFVDHNTRTTTWVDPRR and GPLPSGWEMRLTNTARVYFVDHNTKTTTWDDPRL. The region spanning 483–816 is the HECT domain; that stretch reads SASDLKKRLM…VEETLGFGQE (334 aa). Residue C784 is the Glycyl thioester intermediate of the active site.

The protein belongs to the RSP5/NEDD4 family. In terms of assembly, interacts with creD.

The protein localises to the cytoplasm. The enzyme catalyses S-ubiquitinyl-[E2 ubiquitin-conjugating enzyme]-L-cysteine + [acceptor protein]-L-lysine = [E2 ubiquitin-conjugating enzyme]-L-cysteine + N(6)-ubiquitinyl-[acceptor protein]-L-lysine.. Its pathway is protein modification; protein ubiquitination. E3 ubiquitin-protein ligase which accepts ubiquitin from an E2 ubiquitin-conjugating enzyme in the form of a thioester and then directly transfers the ubiquitin to targeted substrates. Probably involved in the regulatory network controlling carbon source utilization. The protein is Probable E3 ubiquitin-protein ligase hulA (hulA) of Neosartorya fischeri (strain ATCC 1020 / DSM 3700 / CBS 544.65 / FGSC A1164 / JCM 1740 / NRRL 181 / WB 181) (Aspergillus fischerianus).